Consider the following 331-residue polypeptide: Ketol-acid reductoisomerase (NADP(+)) (331 aa).

A KARI N-terminal Rossmann domain is found at Val-2–Thr-182. NADP(+)-binding positions include Phe-25–Gln-28, Ser-51, and Ser-53. His-108 is an active-site residue. Residue Gly-134 coordinates NADP(+). Residues Thr-183 to Ile-328 form the KARI C-terminal knotted domain. Residues Asp-191, Glu-195, Glu-227, and Glu-231 each coordinate Mg(2+). Ser-252 serves as a coordination point for substrate.

This sequence belongs to the ketol-acid reductoisomerase family. It depends on Mg(2+) as a cofactor.

The enzyme catalyses (2R)-2,3-dihydroxy-3-methylbutanoate + NADP(+) = (2S)-2-acetolactate + NADPH + H(+). It catalyses the reaction (2R,3R)-2,3-dihydroxy-3-methylpentanoate + NADP(+) = (S)-2-ethyl-2-hydroxy-3-oxobutanoate + NADPH + H(+). It functions in the pathway amino-acid biosynthesis; L-isoleucine biosynthesis; L-isoleucine from 2-oxobutanoate: step 2/4. Its pathway is amino-acid biosynthesis; L-valine biosynthesis; L-valine from pyruvate: step 2/4. Its function is as follows. Involved in the biosynthesis of branched-chain amino acids (BCAA). Catalyzes an alkyl-migration followed by a ketol-acid reduction of (S)-2-acetolactate (S2AL) to yield (R)-2,3-dihydroxy-isovalerate. In the isomerase reaction, S2AL is rearranged via a Mg-dependent methyl migration to produce 3-hydroxy-3-methyl-2-ketobutyrate (HMKB). In the reductase reaction, this 2-ketoacid undergoes a metal-dependent reduction by NADPH to yield (R)-2,3-dihydroxy-isovalerate. The chain is Ketol-acid reductoisomerase (NADP(+)) from Parafrankia sp. (strain EAN1pec).